A 216-amino-acid polypeptide reads, in one-letter code: uncharacterized protein (216 aa).

The helical transmembrane segment at 5–22 (LGLVFGSVILIYLISLFL) threads the bilayer.

It localises to the membrane. This is an uncharacterized protein from Aquifex aeolicus (strain VF5).